The following is a 587-amino-acid chain: Glutamine--tRNA ligase (587 aa).

Positions 58-68 match the 'HIGH' region motif; sequence PEPNGYLHIGH. ATP contacts are provided by residues 59–61 and 65–71; these read EPN and HIGHAKS. 2 residues coordinate L-glutamine: Asp-91 and Tyr-240. ATP is bound by residues Thr-259 and 294–295; that span reads RL. Positions 301-305 match the 'KMSKS' region motif; that stretch reads VTSKR.

Belongs to the class-I aminoacyl-tRNA synthetase family. As to quaternary structure, monomer.

The protein localises to the cytoplasm. The enzyme catalyses tRNA(Gln) + L-glutamine + ATP = L-glutaminyl-tRNA(Gln) + AMP + diphosphate. The polypeptide is Glutamine--tRNA ligase (Bordetella parapertussis (strain 12822 / ATCC BAA-587 / NCTC 13253)).